The primary structure comprises 1388 residues: Retrotransposon Gag-like protein 9 (1388 aa).

5 disordered regions span residues 491–511 (ATAS…GAMS), 769–790 (TPLM…ASSS), 895–918 (GGVS…RRPS), 1100–1138 (TDSG…PKEV), and 1336–1388 (AMGN…HTNK). Residues 1103–1123 (GEASTSHINITASGSKPTSHM) are compositionally biased toward polar residues. Basic and acidic residues predominate over residues 1359-1374 (YLKEHGDPQEGLHDHL).

This chain is Retrotransposon Gag-like protein 9, found in Homo sapiens (Human).